The primary structure comprises 262 residues: Acyl-[acyl-carrier-protein]--UDP-N-acetylglucosamine O-acyltransferase (262 aa).

It belongs to the transferase hexapeptide repeat family. LpxA subfamily. Homotrimer.

It localises to the cytoplasm. It carries out the reaction a (3R)-hydroxyacyl-[ACP] + UDP-N-acetyl-alpha-D-glucosamine = a UDP-3-O-[(3R)-3-hydroxyacyl]-N-acetyl-alpha-D-glucosamine + holo-[ACP]. It participates in glycolipid biosynthesis; lipid IV(A) biosynthesis; lipid IV(A) from (3R)-3-hydroxytetradecanoyl-[acyl-carrier-protein] and UDP-N-acetyl-alpha-D-glucosamine: step 1/6. Functionally, involved in the biosynthesis of lipid A, a phosphorylated glycolipid that anchors the lipopolysaccharide to the outer membrane of the cell. The protein is Acyl-[acyl-carrier-protein]--UDP-N-acetylglucosamine O-acyltransferase of Salmonella dublin (strain CT_02021853).